The sequence spans 297 residues: Palmitoyl-protein thioesterase ABHD10, mitochondrial (297 aa).

The transit peptide at 1-43 directs the protein to the mitochondrion; the sequence is MAAWAPCRRWGWAAVSFGRHPGLSASLARKPPRAWWLSACRQK. One can recognise an AB hydrolase-1 domain in the interval 69 to 196; it reads IIFIPGYLSN…EIEMKGEWTL (128 aa). Residues Ser-143, Asp-240, and His-270 each act as charge relay system in the active site.

Belongs to the AB hydrolase superfamily.

It localises to the mitochondrion. The enzyme catalyses S-hexadecanoyl-L-cysteinyl-[protein] + H2O = L-cysteinyl-[protein] + hexadecanoate + H(+). It catalyses the reaction mycophenolic acid O-acyl-beta-D-glucuronide + H2O = mycophenolate + D-glucuronate + H(+). Its activity is regulated as follows. Inhibited by palmostatin-B. Functionally, acts as an acyl-protein thioesterase that hydrolyzes fatty acids from acylated residues in proteins. Regulates the mitochondrial S-depalmitoylation of the nucleophilic active site residue of peroxiredoxin-5/PRDX5, a key antioxidant protein, therefore modulating mitochondrial antioxidant ability. Also catalyzes the deglucuronidation of mycophenolic acid acyl-glucuronide, an active metabolite of the immunosuppressant drug mycophenolate. The sequence is that of Palmitoyl-protein thioesterase ABHD10, mitochondrial from Mus musculus (Mouse).